The sequence spans 487 residues: Berbamunine synthase (487 aa).

A heme-binding site is contributed by cysteine 429.

It belongs to the cytochrome P450 family. Requires heme as cofactor.

It is found in the endoplasmic reticulum membrane. The protein resides in the microsome membrane. The catalysed reaction is (R)-N-methylcoclaurine + (S)-N-methylcoclaurine + reduced [NADPH--hemoprotein reductase] + O2 = berbamunine + oxidized [NADPH--hemoprotein reductase] + 2 H2O + H(+). Its pathway is alkaloid biosynthesis; berbamunine biosynthesis; berbamunine from (R)-N-methylcoclaurine and (S)-N-methylcoclaurine: step 1/1. Functionally, forms the bisbenzylisoquinoline alkaloid berbamunine by phenol oxidation of N-methylcoclaurine without the incorporation of oxygen into the product. Oxidatively couples either two molecules of (R)-N-methylcoclaurine to form the (R,R) dimer guattegaumerine or one molecule each of (R)- and (S)-N-methylcoclaurine to form the (R,S) dimer berbamunine. The polypeptide is Berbamunine synthase (CYP80A1) (Berberis stolonifera (Barberry)).